Reading from the N-terminus, the 130-residue chain is Ribosome-binding factor A (130 aa).

Belongs to the RbfA family. Monomer. Binds 30S ribosomal subunits, but not 50S ribosomal subunits or 70S ribosomes.

It localises to the cytoplasm. One of several proteins that assist in the late maturation steps of the functional core of the 30S ribosomal subunit. Associates with free 30S ribosomal subunits (but not with 30S subunits that are part of 70S ribosomes or polysomes). Required for efficient processing of 16S rRNA. May interact with the 5'-terminal helix region of 16S rRNA. The chain is Ribosome-binding factor A from Flavobacterium psychrophilum (strain ATCC 49511 / DSM 21280 / CIP 103535 / JIP02/86).